A 122-amino-acid chain; its full sequence is Large ribosomal subunit protein bL17 (122 aa).

The protein belongs to the bacterial ribosomal protein bL17 family. In terms of assembly, part of the 50S ribosomal subunit. Contacts protein L32.

The polypeptide is Large ribosomal subunit protein bL17 (Wigglesworthia glossinidia brevipalpis).